Here is a 424-residue protein sequence, read N- to C-terminus: Hemagglutinin-esterase (424 aa).

Positions 1 to 16 (MFLLPRFILVSCIIGS) are cleaved as a signal peptide. Positions 7 to 127 (FILVSCIIGS…SNDIWMQNKG (121 aa)) are esterase domain 1. The Virion surface portion of the chain corresponds to 17–392 (LGFYNPPTNV…PICVYDPLPV (376 aa)). Serine 40 acts as the Nucleophile in catalysis. Cysteine 44 and cysteine 65 are joined by a disulfide. N-linked (GlcNAc...) asparagine; by host glycans are attached at residues asparagine 54, asparagine 89, asparagine 114, asparagine 153, asparagine 236, and asparagine 301. 3 disulfide bridges follow: cysteine 113–cysteine 162, cysteine 197–cysteine 276, and cysteine 205–cysteine 249. The tract at residues 128 to 266 (LFYTQVYKNM…GNYLAISNEL (139 aa)) is receptor binding. The tract at residues 267 to 379 (LLTVPTKAIC…RCPTAADINN (113 aa)) is esterase domain 2. Residues cysteine 307 and cysteine 312 are joined by a disulfide bond. A glycan (N-linked (GlcNAc...) asparagine; by host) is linked at asparagine 316. Active-site charge relay system residues include aspartate 326 and histidine 329. An intrachain disulfide couples cysteine 347 to cysteine 371. An N-linked (GlcNAc...) asparagine; by host glycan is attached at asparagine 358. A helical membrane pass occupies residues 393 to 413 (ILLGILLGVAVIIIVVLLLYF). The Intravirion segment spans residues 414–424 (MVDNGTRLHDA). N-linked (GlcNAc...) asparagine; by host glycosylation occurs at asparagine 417.

This sequence belongs to the influenza type C/coronaviruses hemagglutinin-esterase family. As to quaternary structure, homodimer; disulfide-linked. Forms a complex with the M protein in the pre-Golgi. Associates then with S-M complex to form a ternary complex S-M-HE. Post-translationally, N-glycosylated in the host RER.

It localises to the virion membrane. The protein localises to the host cell membrane. It carries out the reaction N-acetyl-9-O-acetylneuraminate + H2O = N-acetylneuraminate + acetate + H(+). The enzyme catalyses N-acetyl-4-O-acetylneuraminate + H2O = N-acetylneuraminate + acetate + H(+). Functionally, structural protein that makes short spikes at the surface of the virus. Contains receptor binding and receptor-destroying activities. Mediates de-O-acetylation of N-acetyl-4-O-acetylneuraminic acid, which is probably the receptor determinant recognized by the virus on the surface of erythrocytes and susceptible cells. This receptor-destroying activity is important for virus release as it probably helps preventing self-aggregation and ensures the efficient spread of the progeny virus from cell to cell. May serve as a secondary viral attachment protein for initiating infection, the spike protein being the major one. May become a target for both the humoral and the cellular branches of the immune system. In Homo sapiens (Human), this protein is Hemagglutinin-esterase.